Reading from the N-terminus, the 890-residue chain is Alanine--tRNA ligase (890 aa).

Positions 573, 577, 675, and 679 each coordinate Zn(2+).

Belongs to the class-II aminoacyl-tRNA synthetase family. Zn(2+) is required as a cofactor.

It localises to the cytoplasm. The enzyme catalyses tRNA(Ala) + L-alanine + ATP = L-alanyl-tRNA(Ala) + AMP + diphosphate. Functionally, catalyzes the attachment of alanine to tRNA(Ala) in a two-step reaction: alanine is first activated by ATP to form Ala-AMP and then transferred to the acceptor end of tRNA(Ala). Also edits incorrectly charged Ser-tRNA(Ala) and Gly-tRNA(Ala) via its editing domain. The chain is Alanine--tRNA ligase from Streptomyces avermitilis (strain ATCC 31267 / DSM 46492 / JCM 5070 / NBRC 14893 / NCIMB 12804 / NRRL 8165 / MA-4680).